A 555-amino-acid polypeptide reads, in one-letter code: Urocanate hydratase (555 aa).

NAD(+) contacts are provided by residues 52 to 53 (GG), Gln130, 176 to 178 (GMG), Glu196, Arg201, 242 to 243 (NA), 263 to 267 (QTSAH), 273 to 274 (YL), and Tyr322. Cys410 is an active-site residue. Residue Gly492 participates in NAD(+) binding.

This sequence belongs to the urocanase family. NAD(+) serves as cofactor.

It localises to the cytoplasm. It carries out the reaction 4-imidazolone-5-propanoate = trans-urocanate + H2O. It functions in the pathway amino-acid degradation; L-histidine degradation into L-glutamate; N-formimidoyl-L-glutamate from L-histidine: step 2/3. In terms of biological role, catalyzes the conversion of urocanate to 4-imidazolone-5-propionate. The polypeptide is Urocanate hydratase (Shewanella putrefaciens (strain CN-32 / ATCC BAA-453)).